A 122-amino-acid polypeptide reads, in one-letter code: Large ribosomal subunit protein uL14 (122 aa).

The protein belongs to the universal ribosomal protein uL14 family. As to quaternary structure, part of the 50S ribosomal subunit. Forms a cluster with proteins L3 and L19. In the 70S ribosome, L14 and L19 interact and together make contacts with the 16S rRNA in bridges B5 and B8.

In terms of biological role, binds to 23S rRNA. Forms part of two intersubunit bridges in the 70S ribosome. In Lactobacillus delbrueckii subsp. bulgaricus (strain ATCC BAA-365 / Lb-18), this protein is Large ribosomal subunit protein uL14.